The chain runs to 614 residues: Inactive leucine-rich repeat receptor-like serine/threonine-protein kinase At5g24100 (614 aa).

A signal peptide spans 1–21 (MSRGRSFIFYFVLFLFFGSSA). At 22–251 (LYSQVTGDLA…KNGIYISEPA (230 aa)) the chain is on the extracellular side. Asn53 is a glycosylation site (N-linked (GlcNAc...) asparagine). LRR repeat units lie at residues 71 to 95 (GTRV…TISR), 96 to 120 (LSEL…FLQL), 121 to 146 (KKLK…TWTN), 148 to 167 (TVLD…GFAN), 168 to 190 (LTGL…DLNL), and 191 to 214 (PGLR…LKRF). Asn146, Asn158, and Asn167 each carry an N-linked (GlcNAc...) asparagine glycan. N-linked (GlcNAc...) asparagine glycosylation is found at Asn197 and Asn202. The chain crosses the membrane as a helical span at residues 252–272 (ILGIAISVCFVIFFVIAVVII). The Cytoplasmic segment spans residues 273–614 (VCYVKRQRKS…VETLEEIERD (342 aa)). One can recognise a Protein kinase domain in the interval 341 to 611 (IASAEFLGKG…VKVVETLEEI (271 aa)). Ser343 carries the phosphoserine modification. Residues 347–355 (LGKGVFGMT) and Lys369 contribute to the ATP site. Phosphoserine is present on Ser420. Residues Thr441, Thr514, and Thr591 each carry the phosphothreonine modification. The LRR 7 repeat unit spans residues 578 to 601 (AKLLQMLQLGTSCTAMVPAKRPDM).

It belongs to the protein kinase superfamily. Ser/Thr protein kinase family.

The protein localises to the cell membrane. This Arabidopsis thaliana (Mouse-ear cress) protein is Inactive leucine-rich repeat receptor-like serine/threonine-protein kinase At5g24100.